Here is a 343-residue protein sequence, read N- to C-terminus: Ubiquitin thioesterase OTU1 (343 aa).

Residues 45-123 are UBX-like; it reads RCKAKGGTHV…IVEEDQTRPK (79 aa). Residues 144-269 form the OTU domain; that stretch reads LTRTAVPADN…GIHYDPLQRN (126 aa). The interval 149-155 is cys-loop; sequence VPADNSC. Residue Asp152 is part of the active site. Catalysis depends on Cys155, which acts as the Nucleophile. Residues 208–218 form a variable-loop region; that stretch reads IRRDDTWGGAI. The tract at residues 258-262 is his-loop; that stretch reads YDGIH. Ile261 is a substrate binding site. His262 is a catalytic residue. Positions 286–291 are S2 site; it reads DIVLVQ. The segment at 313–337 adopts a C2H2-type zinc-finger fold; sequence LRCMLCQKGLTGQAEARDHARETGH. Residue His337 is part of the active site.

In terms of assembly, interacts with VCP; the interaction is direct. Interacts with FAF2/UBXD8. Interacts with DERL1; however interaction is dependent on the UBAX-like region, suggesting that it may be indirect. Interacts with PLAA, UBXN6 and VCP; may form a complex involved in macroautophagy.

It localises to the cytoplasm. The catalysed reaction is Thiol-dependent hydrolysis of ester, thioester, amide, peptide and isopeptide bonds formed by the C-terminal Gly of ubiquitin (a 76-residue protein attached to proteins as an intracellular targeting signal).. Hydrolase that can remove conjugated ubiquitin from proteins and participates in endoplasmic reticulum-associated degradation (ERAD) for misfolded lumenal proteins. May act by triming the ubiquitin chain on the associated substrate to facilitate their threading through the VCP/p97 pore. Ubiquitin moieties on substrates may present a steric impediment to the threading process when the substrate is transferred to the VCP pore and threaded through VCP's axial channel. Mediates deubiquitination of 'Lys-27'-, 'Lys-29'- and 'Lys-33'-linked polyubiquitin chains. Also able to hydrolyze 'Lys-11'-linked ubiquitin chains. Cleaves both polyubiquitin and di-ubiquitin. May play a role in macroautophagy, regulating for instance the clearance of damaged lysosomes. May recruit PLAA, UBXN6 and VCP to damaged lysosome membranes decorated with K48-linked ubiquitin chains and remove these chains allowing autophagosome formation. The polypeptide is Ubiquitin thioesterase OTU1 (Yod1) (Rattus norvegicus (Rat)).